Consider the following 452-residue polypeptide: Exodeoxyribonuclease 7 large subunit (452 aa).

It belongs to the XseA family. In terms of assembly, heterooligomer composed of large and small subunits.

The protein localises to the cytoplasm. It carries out the reaction Exonucleolytic cleavage in either 5'- to 3'- or 3'- to 5'-direction to yield nucleoside 5'-phosphates.. Its function is as follows. Bidirectionally degrades single-stranded DNA into large acid-insoluble oligonucleotides, which are then degraded further into small acid-soluble oligonucleotides. This chain is Exodeoxyribonuclease 7 large subunit, found in Lysinibacillus sphaericus (strain C3-41).